Reading from the N-terminus, the 544-residue chain is Hydroxylamine reductase (544 aa).

The [4Fe-4S] cluster site is built by C3, C6, C15, and C21. Hybrid [4Fe-2O-2S] cluster-binding residues include H244, E268, C313, C400, C428, C453, E487, and K489. A Cysteine persulfide modification is found at C400.

Belongs to the HCP family. [4Fe-4S] cluster serves as cofactor. It depends on hybrid [4Fe-2O-2S] cluster as a cofactor.

It localises to the cytoplasm. The enzyme catalyses A + NH4(+) + H2O = hydroxylamine + AH2 + H(+). Catalyzes the reduction of hydroxylamine to form NH(3) and H(2)O. The sequence is that of Hydroxylamine reductase from Trichormus variabilis (strain ATCC 29413 / PCC 7937) (Anabaena variabilis).